The primary structure comprises 1141 residues: MAEDGSEEIMFIWCEDCSQYHDSECPELGPVVMVKDSFVLSRARSSLPPNLEIRRLEDGAEGVFAITQLVKRTQFGPFESRRVAKWEKESAFPLKVFQKDGHPVCFDTSNEDDCNWMMLVRPAAEAEHQNLTAYQHGSDVYFTTSRDIPPGTELRVWYAAFYAKKMDKPMLKQAGSGVHAAGTPENSAPVESEPSQWACKVCSATFLELQLLNEHLLGHLEQAKSLPPGSQSEAAAPEKEQDTPRGEPPAVPESENVATKEQKKKPRRGRKPKVSKAEQPLVIVEDKEPTEQVAEIITEVPPDEPVSATPDERIMELVLGKLATTTTDTSSVPKFTHHQNNTITLKRSLILSSRHGIRRKLIKQLGEHKRVYQCNICSKIFQNSSNLSRHVRSHGDKLFKCEECAKLFSRKESLKQHVSYKHSRNEVDGEYRYRCGTCEKTFRIESALEFHNCRTDDKTFQCEMCFRFFSTNSNLSKHKKKHGDKKFACEVCSKMFYRKDVMLDHQRRHLEGVRRVKREDLEAGGENLVRYKKEPSGCPVCGKVFSCRSNMNKHLLTHGDKKYTCEICGRKFFRVDVLRDHIHVHFKDIALMDDHQREEFIGKIGISSEENDDNSDESADSEPHKYSCKRCQLTFGRGKEYLKHIMEVHKEKGYGCSICNRRFALKATYHAHMVIHRENLPDPNVQKYIHPCEICGRIFNSIGNLERHKLIHTGVKSHACEQCGKSFARKDMLKEHMRVHDNVREYLCAECGKGMKTKHALRHHMKLHKGIKEYECKECHRRFAQKVNMLKHCKRHTGIKDFMCELCGKTFSERNTMETHKLIHTVGKQWTCSVCDKKYVTEYMLQKHVQLTHDKVEAQSCQLCGTKVSTRASMSRHMRRKHPEVLAVRIDDLDHLPETTTIDASSIGIVQPELTLEQEDLAEGKHGKAAKRSHKRKQKPEEEAGAPVPEDATFSEYSEKETEFTGSVGDETNSAVQSIQQVVVTLGDPNVTTPSSSVGLTNITVTPITTAAATQFTNLQPVAVGHLTTPERQLQLDNSILTVTFDTVSGSAMLHNRQNDVQIHPQPEASNPQSVAHFINLTTLVNSITPLGSQLSDQHPLTWRAVPQTDVLPPSQPQAPPQQAAQPQVQAEQQQQQMYSY.

An SET domain is found at 49 to 159 (PNLEIRRLED…PGTELRVWYA (111 aa)). Residues 197–219 (WACKVCSATFLELQLLNEHLLGH) form a C2H2-type 1 zinc finger. The interval 224-283 (KSLPPGSQSEAAAPEKEQDTPRGEPPAVPESENVATKEQKKKPRRGRKPKVSKAEQPLVI) is disordered. Residues 236–245 (APEKEQDTPR) show a composition bias toward basic and acidic residues. A compositionally biased stretch (basic residues) spans 262 to 274 (QKKKPRRGRKPKV). 4 consecutive C2H2-type zinc fingers follow at residues 372 to 394 (YQCN…VRSH), 399 to 422 (FKCE…SYKH), 460 to 482 (FQCE…KKKH), and 487 to 509 (FACE…QRRH). Lysine 517 is covalently cross-linked (Glycyl lysine isopeptide (Lys-Gly) (interchain with G-Cter in SUMO2)). 2 C2H2-type zinc fingers span residues 536-558 (SGCP…LLTH) and 563-585 (YTCE…IHVH). The tract at residues 604-623 (IGISSEENDDNSDESADSEP) is disordered. Residues 609 to 620 (EENDDNSDESAD) show a composition bias toward acidic residues. 9 C2H2-type zinc fingers span residues 626-649 (YSCK…MEVH), 654-676 (YGCS…MVIH), 690-712 (HPCE…KLIH), 718-740 (HACE…MRVH), 746-768 (YLCA…MKLH), 774-796 (YECK…CKRH), 802-824 (FMCE…KLIH), 830-853 (WTCS…QLTH), and 859-882 (QSCQ…RRKH). Disordered stretches follow at residues 922-973 (AEGK…DETN) and 1108-1141 (QTDV…MYSY). Residues 927 to 938 (GKAAKRSHKRKQ) show a composition bias toward basic residues. The segment covering 1121 to 1141 (PQQAAQPQVQAEQQQQQMYSY) has biased composition (low complexity).

This sequence belongs to the class V-like SAM-binding methyltransferase superfamily. Detected in all tissues examined.

The protein resides in the nucleus. Sequence-specific DNA-binding transcriptional regulator. Plays a role as a molecular node in a transcriptional network regulating embryonic development and cell fate decision. Stimulates the expression of upstream key transcriptional activators and repressors of the Wnt/beta-catenin and MAPK/ERK pathways, respectively, that are essential for naive pluripotency and self-renewal maintenance of embryonic stem cells (ESCs). Specifically promotes SPRY1 and RSPO1 transcription activation through recognition and direct binding of a specific DNA sequence in their promoter regions. Involved in early embryo development. Also plays a role in induced pluripotent stem cells (iPSCs) reprogramming. The polypeptide is PR domain zinc finger protein 15 (Homo sapiens (Human)).